We begin with the raw amino-acid sequence, 205 residues long: Holliday junction branch migration complex subunit RuvA (205 aa).

Residues 1–64 (MIGKLKGVVD…EDMIRLYGFR (64 aa)) form a domain I region. Positions 65–143 (SDAEREWFRL…AFAPVDPALI (79 aa)) are domain II. A flexible linker region spans residues 144–152 (RLAGAVEER). The tract at residues 153–205 (TAPQPVADAISALVNLGYPQIQASAAVAAALQGAGEGAEAKTLIRLGLRELAR) is domain III.

It belongs to the RuvA family. In terms of assembly, homotetramer. Forms an RuvA(8)-RuvB(12)-Holliday junction (HJ) complex. HJ DNA is sandwiched between 2 RuvA tetramers; dsDNA enters through RuvA and exits via RuvB. An RuvB hexamer assembles on each DNA strand where it exits the tetramer. Each RuvB hexamer is contacted by two RuvA subunits (via domain III) on 2 adjacent RuvB subunits; this complex drives branch migration. In the full resolvosome a probable DNA-RuvA(4)-RuvB(12)-RuvC(2) complex forms which resolves the HJ.

The protein resides in the cytoplasm. Functionally, the RuvA-RuvB-RuvC complex processes Holliday junction (HJ) DNA during genetic recombination and DNA repair, while the RuvA-RuvB complex plays an important role in the rescue of blocked DNA replication forks via replication fork reversal (RFR). RuvA specifically binds to HJ cruciform DNA, conferring on it an open structure. The RuvB hexamer acts as an ATP-dependent pump, pulling dsDNA into and through the RuvAB complex. HJ branch migration allows RuvC to scan DNA until it finds its consensus sequence, where it cleaves and resolves the cruciform DNA. In Methylobacterium nodulans (strain LMG 21967 / CNCM I-2342 / ORS 2060), this protein is Holliday junction branch migration complex subunit RuvA.